Here is a 233-residue protein sequence, read N- to C-terminus: Phytol kinase (233 aa).

6 helical membrane passes run methionine 9–leucine 29, valine 56–phenylalanine 76, valine 96–phenylalanine 118, leucine 122–glycine 144, phenylalanine 172–valine 192, and asparagine 213–glycine 233.

The protein belongs to the polyprenol kinase family.

It localises to the cell membrane. The enzyme catalyses phytol + CTP = phytyl phosphate + CDP + H(+). The protein operates within cofactor biosynthesis; tocopherol biosynthesis. Functionally, catalyzes the CTP-dependent phosphorylation of phytol to phytylmonophosphate (PMP). Can also use UTP as an alternative phosphate donor, but not ATP or GTP. Is involved in tocopherol biosynthesis, via the utilization of phytol generated by chlorophyll degradation. Also plays a significant but not critical role in the recycling of phytol for the biosynthesis of new chlorophyll molecules. This Synechocystis sp. (strain ATCC 27184 / PCC 6803 / Kazusa) protein is Phytol kinase.